Consider the following 599-residue polypeptide: Elongation factor 4 (599 aa).

In terms of domain architecture, tr-type G spans 2–185 (ENIRNFSIIA…AITKRIPPPK (184 aa)). GTP contacts are provided by residues 14-19 (DHGKST) and 132-135 (NKID).

This sequence belongs to the TRAFAC class translation factor GTPase superfamily. Classic translation factor GTPase family. LepA subfamily.

The protein localises to the cell inner membrane. It carries out the reaction GTP + H2O = GDP + phosphate + H(+). Its function is as follows. Required for accurate and efficient protein synthesis under certain stress conditions. May act as a fidelity factor of the translation reaction, by catalyzing a one-codon backward translocation of tRNAs on improperly translocated ribosomes. Back-translocation proceeds from a post-translocation (POST) complex to a pre-translocation (PRE) complex, thus giving elongation factor G a second chance to translocate the tRNAs correctly. Binds to ribosomes in a GTP-dependent manner. The protein is Elongation factor 4 of Hydrogenobaculum sp. (strain Y04AAS1).